Consider the following 332-residue polypeptide: Phospholipase A2 inhibitor beta (332 aa).

Positions 1–23 (MKSSVPSLLFVSLVMSLNSYTQQ) are cleaved as a signal peptide. N-linked (GlcNAc...) asparagine glycosylation occurs at Asn-35. 8 LRR repeats span residues 78-101 (LPNL…LFRN), 103-125 (PELH…IFTS), 127-149 (TSLT…WFET), 150-173 (LKEL…CFDK), 175-197 (EKLT…MFSG), 198-221 (LDNL…SFHG), 223-245 (PKLS…VFQP), and 247-269 (NHXV…VAIP). Asn-232 is a glycosylation site (N-linked (GlcNAc...) asparagine). Residue Asn-272 is glycosylated (N-linked (GlcNAc...) asparagine). In terms of domain architecture, LRRCT spans 280–331 (NPWACNCRMDNLLTWVKEHKIDLYSKQEIVCAFPKSFKGEEATSLHRSQICP).

Belongs to the beta-type phospholipase A2 inhibitor family. As to quaternary structure, homotrimer.

It is found in the secreted. In terms of biological role, inhibits the enzymatic activity of the basic phospholipase A2 (PLA2). The protein is Phospholipase A2 inhibitor beta of Elaphe climacophora (Japanese rat snake).